The following is a 344-amino-acid chain: MQQITLTQPDDWHLHFRDNDMLLETVPATARTFKRAIVMPNLVPPVVNAELASAYRDRILAARPQGSEFEPLMTLFLTNTTSIDDIRAAKKAGVVAAKLYPAGATTNSDAAVKGIEALFPVFAEMAEQGMLLLIHGEVTESHVDIFDREKLFIEQFLVKIVNQFPQLKVVLEHITTSDAVDFVSASSHNVAATITPQHLLLNRNDLLVGGVRPHNFCLPVLKRSTHQQALRKAVATGSSKFFLGTDSAPHEKSAKESACGCAGCYSAWSALELYAQVFEELDALDKLEGFASHHGADFYGLPRNTKQVTLVKEEWTIPEVITLPNGEPIVPFFAGQTVNWALKA.

Zn(2+) contacts are provided by H13 and H15. Residues 15–17 (HFR) and N41 contribute to the substrate site. 3 residues coordinate Zn(2+): K98, H135, and H173. K98 carries the N6-carboxylysine modification. Residue H135 coordinates substrate. A substrate-binding site is contributed by L218. D246 contacts Zn(2+). The active site involves D246. Substrate-binding residues include H250 and A262.

The protein belongs to the metallo-dependent hydrolases superfamily. DHOase family. Class II DHOase subfamily. In terms of assembly, homodimer. Zn(2+) is required as a cofactor.

The catalysed reaction is (S)-dihydroorotate + H2O = N-carbamoyl-L-aspartate + H(+). It functions in the pathway pyrimidine metabolism; UMP biosynthesis via de novo pathway; (S)-dihydroorotate from bicarbonate: step 3/3. In terms of biological role, catalyzes the reversible cyclization of carbamoyl aspartate to dihydroorotate. The sequence is that of Dihydroorotase from Pseudoalteromonas atlantica (strain T6c / ATCC BAA-1087).